The chain runs to 552 residues: E3 ubiquitin-protein ligase MGRN1 (552 aa).

Gly2 carries N-myristoyl glycine lipidation. An RING-type zinc finger spans residues 278 to 317; sequence CVVCLSDLRDTLILPCRHLCLCTSCADTLRYQANNCPICR. The disordered stretch occupies residues 355–384; the sequence is SCPFKKSKPHPASLASKKPKRETNSDSVPP. Residues 406–409 carry the Required for TSG101-binding motif; the sequence is PSAP. Tyr411 is modified (phosphotyrosine). The interval 439-552 is disordered; that stretch reads SSRQKGRPQS…PDSCSVGIDE (114 aa). Residues 450-460 show a composition bias toward polar residues; the sequence is APDSTLRSPSS. The span at 464-475 shows a compositional bias: acidic residues; that stretch reads EEDEEKLSEDVD. Ser471 is subject to Phosphoserine. Residues 504-523 are compositionally biased toward polar residues; the sequence is SSSPQQGTRAASIENVLQDS. At Ser524 the chain carries Phosphoserine.

In terms of assembly, interacts with MC1R and MC4R, but not with TBXA2R. Interacts with TSG101. Interacts with mislocalized cytosolically exposed PRNP; this interaction alters MGRN1 subcellular location and causes lysosomal enlargement. Autoubiquitinated in vitro.

It is found in the early endosome. It localises to the cytoplasm. Its subcellular location is the cytosol. The protein resides in the nucleus. The protein localises to the cell membrane. It catalyses the reaction S-ubiquitinyl-[E2 ubiquitin-conjugating enzyme]-L-cysteine + [acceptor protein]-L-lysine = [E2 ubiquitin-conjugating enzyme]-L-cysteine + N(6)-ubiquitinyl-[acceptor protein]-L-lysine.. Its pathway is protein modification; protein ubiquitination. E3 ubiquitin-protein ligase. Mediates monoubiquitination at multiple sites of TSG101 in the presence of UBE2D1, but not of UBE2G1, nor UBE2H. Plays a role in the regulation of endosome-to-lysosome trafficking. Impairs MC1R- and MC4R-signaling by competing with GNAS-binding to MCRs and inhibiting agonist-induced cAMP production. Does not inhibit ADRB2-signaling. Does not promote MC1R ubiquitination. Acts also as a negative regulator of hedgehog signaling. The protein is E3 ubiquitin-protein ligase MGRN1 (MGRN1) of Homo sapiens (Human).